A 453-amino-acid polypeptide reads, in one-letter code: Exopolyphosphatase PRUNE1 (453 aa).

Methionine 1 is subject to N-acetylmethionine. Mn(2+) contacts are provided by aspartate 28, aspartate 30, aspartate 106, and aspartate 179. The DHH motif signature appears at 106 to 108; the sequence is DHH. The interval 393-420 is essential for homodimerization; it reads SLLSGLSQDEEEPPLPPTPMNSLVDECP. Positions 396–419 are disordered; it reads SGLSQDEEEPPLPPTPMNSLVDEC. At serine 399 the chain carries Phosphoserine. The residue at position 410 (threonine 410) is a Phosphothreonine. Serine 414 carries the phosphoserine modification.

It belongs to the PPase class C family. Prune subfamily. In terms of assembly, homooligomer. Able to homodimerize via its C-terminal domain. Interacts with NME1. Interacts with GSK3; at focal adhesion complexes where paxillin and vinculin are colocalized. The cofactor is Mn(2+).

The protein localises to the cytoplasm. Its subcellular location is the nucleus. The protein resides in the cell junction. It is found in the focal adhesion. It catalyses the reaction diphosphate + H2O = 2 phosphate + H(+). Its activity is regulated as follows. Activated by magnesium ions and inhibited by manganese ions. Inhibited by dipyridamole, moderately sensitive to IBMX and inhibited by vinpocetine. Functionally, phosphodiesterase (PDE) that has higher activity toward cAMP than cGMP, as substrate. Plays a role in cell proliferation, is able to induce cell motility and acts as a negative regulator of NME1. In Bos taurus (Bovine), this protein is Exopolyphosphatase PRUNE1 (PRUNE1).